Here is a 309-residue protein sequence, read N- to C-terminus: Sodium/potassium-transporting ATPase subunit beta-1 (309 aa).

The Cytoplasmic segment spans residues 1-45 (MSKNNGKGAKGEFEFPQPAKKQTFSEMIYNPQEGTFFGRTGKSWS). The helical; Signal-anchor for type II membrane protein transmembrane segment at 46–66 (QLLLFYTIFYIVLAALFTICM) threads the bilayer. The Extracellular portion of the chain corresponds to 67–309 (QGLLSTISDT…GSVTFQILLD (243 aa)). The N-linked (GlcNAc...) asparagine glycan is linked to asparagine 133. Cystine bridges form between cysteine 143-cysteine 155 and cysteine 165-cysteine 179. The N-linked (GlcNAc...) asparagine glycan is linked to asparagine 211. An intrachain disulfide couples cysteine 225 to cysteine 282.

Belongs to the X(+)/potassium ATPases subunit beta family. As to quaternary structure, the sodium/potassium-transporting ATPase is composed of a catalytic alpha subunit, an auxiliary non-catalytic beta subunit and an additional regulatory subunit. Interacts with nkain. In terms of tissue distribution, in embryos, it is expressed in the neurons of the CNS and PNS, in Garland cells and posterior spiracles. In adults, it is concentrated in the thorax and abdomen (muscle tissue, digestive system and Malpighian tubules) and weakly expressed in the head. Expression is diffuse in the nervous system.

It localises to the cell membrane. Functionally, this is the non-catalytic component of the active enzyme, which catalyzes the hydrolysis of ATP coupled with the exchange of Na(+) and K(+) ions across the plasma membrane. The beta subunit regulates, through assembly of alpha/beta heterodimers, the number of sodium pumps transported to the plasma membrane. The chain is Sodium/potassium-transporting ATPase subunit beta-1 (nrv1) from Drosophila melanogaster (Fruit fly).